A 208-amino-acid polypeptide reads, in one-letter code: Ribosomal RNA large subunit methyltransferase E (208 aa).

The S-adenosyl-L-methionine site is built by G63, W65, D83, D99, and D124. K164 (proton acceptor) is an active-site residue.

It belongs to the class I-like SAM-binding methyltransferase superfamily. RNA methyltransferase RlmE family.

It is found in the cytoplasm. It catalyses the reaction uridine(2552) in 23S rRNA + S-adenosyl-L-methionine = 2'-O-methyluridine(2552) in 23S rRNA + S-adenosyl-L-homocysteine + H(+). Specifically methylates the uridine in position 2552 of 23S rRNA at the 2'-O position of the ribose in the fully assembled 50S ribosomal subunit. This is Ribosomal RNA large subunit methyltransferase E from Hamiltonella defensa subsp. Acyrthosiphon pisum (strain 5AT).